The primary structure comprises 320 residues: Ferrochelatase (320 aa).

Residues His194 and Glu275 each coordinate Fe cation.

It belongs to the ferrochelatase family. Monomer.

The protein resides in the cytoplasm. It carries out the reaction heme b + 2 H(+) = protoporphyrin IX + Fe(2+). It functions in the pathway porphyrin-containing compound metabolism; protoheme biosynthesis; protoheme from protoporphyrin-IX: step 1/1. Its function is as follows. Catalyzes the ferrous insertion into protoporphyrin IX. In Escherichia coli O45:K1 (strain S88 / ExPEC), this protein is Ferrochelatase.